We begin with the raw amino-acid sequence, 115 residues long: Succinate dehydrogenase assembly factor 3, mitochondrial (115 aa).

This sequence belongs to the complex I LYR family. SDHAF3 subfamily. Interacts with the iron-sulfur protein subunit within the SDH catalytic dimer.

Its subcellular location is the mitochondrion matrix. Functionally, plays an essential role in the assembly of succinate dehydrogenase (SDH), an enzyme complex (also referred to as respiratory complex II) that is a component of both the tricarboxylic acid (TCA) cycle and the mitochondrial electron transport chain, and which couples the oxidation of succinate to fumarate with the reduction of ubiquinone (coenzyme Q) to ubiquinol. Promotes maturation of the iron-sulfur protein subunit of the SDH catalytic dimer, protecting it from the deleterious effects of oxidants. May act together with SDHAF1. The chain is Succinate dehydrogenase assembly factor 3, mitochondrial (acn9) from Nematostella vectensis (Starlet sea anemone).